The chain runs to 102 residues: Large ribosomal subunit protein bL21 (102 aa).

The protein belongs to the bacterial ribosomal protein bL21 family. Part of the 50S ribosomal subunit. Contacts protein L20.

In terms of biological role, this protein binds to 23S rRNA in the presence of protein L20. This Bacillus pumilus (strain SAFR-032) protein is Large ribosomal subunit protein bL21.